Consider the following 381-residue polypeptide: MFTNNFSQKQILGVSKDASESEIRKAYRQLTKQWHPDKNPGNEEAQEKFIEINKAHEVLSDPEQRKIYDAYGEEGLNGQPGGPGGGPGEGFPGGGFGFDPFGDIFDNIFGGRRRQNAVRRGPSMEQIVQIHLSSFYTGGSFTLEIPVKRTCSVCSGQGFNPKYSADKAIESCPVCGGSGFRVIEHMIAPGFRQQMRMPCNACNGNGRTIKHKCPRCKGERVAEVVESFDIKVPAGAPEGYRIGFRGKADEIPGMEAGDIIVILEAAGGDYGWTRKDNDLYRKETISVREALLGNWKRKIQKLDGSFMEVKRSAGEVVHPGETERVKNQGMPIYNLHKGKTTSAHGSAYIEWEVKFPKKLKGKFLKDLNNLFEKYDNEFDEL.

The J domain occupies 5 to 74 (NFSQKQILGV…RKIYDAYGEE (70 aa)). The interval 72 to 93 (GEEGLNGQPGGPGGGPGEGFPG) is disordered. Positions 78–93 (GQPGGPGGGPGEGFPG) are enriched in gly residues. The CR-type zinc-finger motif lies at 138–225 (GGSFTLEIPV…CKGERVAEVV (88 aa)). 4 CXXCXGXG motif repeats span residues 151–158 (CSVCSGQG), 172–179 (CPVCGGSG), 199–206 (CNACNGNG), and 213–220 (CPRCKGER). The Prevents secretion from ER motif lies at 378–381 (FDEL).

It localises to the endoplasmic reticulum. The sequence is that of DnaJ-related protein spj1 (spj1) from Schizosaccharomyces pombe (strain 972 / ATCC 24843) (Fission yeast).